A 628-amino-acid chain; its full sequence is Keratin, type II cytoskeletal 3 (628 aa).

The segment at 1-21 (MSRQASKTSGGGSQGFSGRSA) is disordered. A head region spans residues 1 to 197 (MSRQASKTSG…DPQIGQVKAQ (197 aa)). 2 positions are modified to phosphoserine: Ser13 and Ser56. A coil 1A region spans residues 198–233 (EREQIKTLNNKFASFIDKVRFLEQQNKVLETKWNLL). The IF rod domain occupies 198-513 (EREQIKTLNN…KLLEGEEYRM (316 aa)). The tract at residues 234-254 (QQQGTSSISGTNNLEPLFENH) is linker 1. A coil 1B region spans residues 255–346 (INYLRSYLDN…TLYDAELSQM (92 aa)). An N6,N6-dimethyllysine modification is found at Lys296. Residues 347–370 (QSHISDTSVVLSMDNNRSLDLDSI) form a linker 12 region. Ser364 is subject to Phosphoserine. The interval 371-509 (IAEVRAQYED…ATYRKLLEGE (139 aa)) is coil 2. Positions 510–628 (EYRMSGECPS…SSQSSQRYSR (119 aa)) are tail. Residues 605–628 (SSASNRGGSIKFSQSSQSSQRYSR) are disordered. Residues 617 to 628 (SQSSQSSQRYSR) show a composition bias toward low complexity.

It belongs to the intermediate filament family. Heterotetramer of two type I and two type II keratins. Keratin-3 associates with keratin-12. In terms of tissue distribution, cornea specific.

The chain is Keratin, type II cytoskeletal 3 (KRT3) from Homo sapiens (Human).